Consider the following 688-residue polypeptide: Glycine--tRNA ligase beta subunit (688 aa).

This sequence belongs to the class-II aminoacyl-tRNA synthetase family. In terms of assembly, tetramer of two alpha and two beta subunits.

The protein resides in the cytoplasm. The enzyme catalyses tRNA(Gly) + glycine + ATP = glycyl-tRNA(Gly) + AMP + diphosphate. The sequence is that of Glycine--tRNA ligase beta subunit from Clostridioides difficile (strain 630) (Peptoclostridium difficile).